The following is a 556-amino-acid chain: 2-methylpropanoate--CoA ligase CCL4 (556 aa).

ATP is bound by residues 192–200 (TSGTTSSPK), 325–330 (HGYGLT), Asp-423, 435–438 (IKDR), and Lys-531. The interval 260-325 (DSEIIYDMIK…TESLGFAVSH (66 aa)) is SBD1. Residues 326-402 (GYGLTETAGL…LRGGSVMLGY (77 aa)) are SBD2.

The protein belongs to the ATP-dependent AMP-binding enzyme family. In terms of tissue distribution, mostly expressed in old leaves and in cones and glandular trichomes (lupulin glands) after flowering, and, to a lower extent, in stems, young leaves and flowers.

It localises to the cytoplasm. Its subcellular location is the cytosol. It catalyses the reaction 2-methylpropanoate + ATP + CoA = 2-methylpropanoyl-CoA + AMP + diphosphate. The catalysed reaction is propanoate + ATP + CoA = propanoyl-CoA + AMP + diphosphate. The enzyme catalyses butanoate + ATP + CoA = butanoyl-CoA + AMP + diphosphate. It carries out the reaction 2-methylbutanoate + ATP + CoA = 2-methylbutanoyl-CoA + AMP + diphosphate. It participates in secondary metabolite biosynthesis. Involved in the biosynthesis of prenylated phenolics natural products which contribute to the bitter taste of beer and display broad biological activities. Catalyzes the ligation of CoA on 2-methylpropanoate (isobutyric acid) and 2-methylbutanoate to produce 2-methylpropanoyl-CoA and 2-methylbutanoyl-CoA, respectively. Can also use propanoate and butanoate as substrates with a lower efficiency. The chain is 2-methylpropanoate--CoA ligase CCL4 from Humulus lupulus (European hop).